A 103-amino-acid polypeptide reads, in one-letter code: MQPNDITFFQRFQDDILAGRKTITIRDESESHFKTGDVLRVGRFEDDGYFCTIEVTATSTVTLDTLTEKHAEQENMTLTELKKVIADIYPGQTQFYVIEFKCL.

Residues 6-101 (ITFFQRFQDD…QTQFYVIEFK (96 aa)) form the ASCH domain. Lysine 21 serves as the catalytic Proton acceptor. Threonine 24 serves as the catalytic Nucleophile. Residue glutamate 74 is the Proton donor of the active site.

Belongs to the N(4)-acetylcytidine amidohydrolase family.

The enzyme catalyses N(4)-acetylcytidine + H2O = cytidine + acetate + H(+). It catalyses the reaction N(4)-acetyl-2'-deoxycytidine + H2O = 2'-deoxycytidine + acetate + H(+). The catalysed reaction is N(4)-acetylcytosine + H2O = cytosine + acetate + H(+). In terms of biological role, catalyzes the hydrolysis of N(4)-acetylcytidine (ac4C). The chain is N(4)-acetylcytidine amidohydrolase (yqfB) from Escherichia coli (strain K12 / MC4100 / BW2952).